We begin with the raw amino-acid sequence, 1431 residues long: Probable ATP-dependent RNA helicase spindle-E (1431 aa).

Positions 127–294 (LAAIRENPVV…FAMSSSLPPV (168 aa)) constitute a Helicase ATP-binding domain. 140-147 (GETGCGKT) provides a ligand contact to ATP. A DEAH box motif is present at residues 240–243 (DEVH). The region spanning 354–526 (QSQQSYEEAK…NSVLKAKELE (173 aa)) is the Helicase C-terminal domain. A Tudor domain is found at 937–1000 (AKAVTKGLQL…RLMSPQLKRD (64 aa)).

It belongs to the DEAD box helicase family. DEAH subfamily.

It is found in the cytoplasm. It catalyses the reaction ATP + H2O = ADP + phosphate + H(+). Functionally, probable ATP-binding RNA helicase which plays a central role during spermatogenesis and oogenesis by repressing transposable elements and preventing their mobilization, which is essential for the germline integrity. Acts via the piRNA metabolic process, which mediates the repression of transposable elements during meiosis by forming complexes composed of piRNAs and Piwi and govern the methylation and subsequent repression of transposons. Involved in the repression of LTR retrotransposon copia. Also involved in telomere regulation by repressing specialized telomeric retroelements HeT-A, TAHRE, and TART; Drosophila telomeres being maintained by transposition of specialized telomeric retroelements. Involved in telomeric trans-silencing, a repression mechanism by which a transposon or a transgene inserted in subtelomeric heterochromatin has the capacity to repress in trans in the female germline, a homologous transposon, or transgene located in euchromatin. Involved in the repression of testis-expressed Stellate genes by the homologous Su(Ste) repeats. Required for anteroposterior and dorsoventral axis formation during oogenesis. The sequence is that of Probable ATP-dependent RNA helicase spindle-E (spn-E) from Drosophila mojavensis (Fruit fly).